The chain runs to 224 residues: UPF0758 protein PSPTO_0086 (224 aa).

The MPN domain maps to 102-224 (ALENPAQVRN…PLSMVEKGLM (123 aa)). Residues His-173, His-175, and Asp-186 each coordinate Zn(2+). Positions 173 to 186 (HNHPSGITTPSRSD) match the JAMM motif motif.

Belongs to the UPF0758 family.

The chain is UPF0758 protein PSPTO_0086 from Pseudomonas syringae pv. tomato (strain ATCC BAA-871 / DC3000).